We begin with the raw amino-acid sequence, 199 residues long: Ribonuclease HII (199 aa).

The RNase H type-2 domain occupies 10-199; that stretch reads HLVAGVDEVG…VKRALGLASN (190 aa). 3 residues coordinate a divalent metal cation: aspartate 16, glutamate 17, and aspartate 108.

It belongs to the RNase HII family. Requires Mn(2+) as cofactor. The cofactor is Mg(2+).

The protein localises to the cytoplasm. It catalyses the reaction Endonucleolytic cleavage to 5'-phosphomonoester.. Endonuclease that specifically degrades the RNA of RNA-DNA hybrids. This chain is Ribonuclease HII, found in Klebsiella pneumoniae (strain 342).